Reading from the N-terminus, the 215-residue chain is Glycerol-3-phosphate acyltransferase (215 aa).

The next 5 helical transmembrane spans lie at 1–21, 57–77, 85–105, 126–146, and 165–185; these read MAFLISALLILIGYLLGSIPT, IFVLTVDLAKAMLAVILVKLW, MIPLEWKSWLVVFAAIAAVLG, VLLVLNPIVALGTLGSFLAML, and VLMFGLHQPLPYCLFGVIVGL.

It belongs to the PlsY family. In terms of assembly, probably interacts with PlsX.

Its subcellular location is the cell inner membrane. It catalyses the reaction an acyl phosphate + sn-glycerol 3-phosphate = a 1-acyl-sn-glycero-3-phosphate + phosphate. The protein operates within lipid metabolism; phospholipid metabolism. In terms of biological role, catalyzes the transfer of an acyl group from acyl-phosphate (acyl-PO(4)) to glycerol-3-phosphate (G3P) to form lysophosphatidic acid (LPA). This enzyme utilizes acyl-phosphate as fatty acyl donor, but not acyl-CoA or acyl-ACP. The sequence is that of Glycerol-3-phosphate acyltransferase from Crocosphaera subtropica (strain ATCC 51142 / BH68) (Cyanothece sp. (strain ATCC 51142)).